The sequence spans 1339 residues: Inhibitor of Bruton tyrosine kinase (1339 aa).

ANK repeat units lie at residues 51–81 (FGRN…DLAV), 86–115 (SGWT…NLYI), and 119–154 (DGYT…NVNF). RCC1 repeat units follow at residues 142 to 195 (PTEL…FLSQ), 196 to 247 (KGQV…VLTE), and 249 to 302 (GYVY…LWTK). The 82-residue stretch at 555–636 (HDVTFQVGTK…IYSDTCDMLL (82 aa)) folds into the BTB 1 domain. Residues 685 to 704 (EKQKGKTKQSKKTRSIGDET) are disordered. The segment covering 689 to 698 (GKTKQSKKTR) has biased composition (basic residues). One can recognise a BTB 2 domain in the interval 758 to 826 (YDVMMKSEDG…IYTDEVLTVK (69 aa)). Positions 970-980 (SKAKPKKKQRK) are enriched in basic residues. 3 disordered regions span residues 970 to 993 (SKAK…LSDI), 1058 to 1089 (RSSP…SRIT), and 1208 to 1237 (FPSL…SGTL). The segment covering 1214–1231 (DVKKSKHTEELDPSELAR) has biased composition (basic and acidic residues).

The protein resides in the cytoplasm. Its subcellular location is the membrane. Functionally, acts as an inhibitor of BTK tyrosine kinase activity, thereby playing a role in B-cell development. In Xenopus laevis (African clawed frog), this protein is Inhibitor of Bruton tyrosine kinase (ibtk).